The sequence spans 55 residues: Large ribosomal subunit protein bL33A (55 aa).

This sequence belongs to the bacterial ribosomal protein bL33 family.

This Rhodococcus jostii (strain RHA1) protein is Large ribosomal subunit protein bL33A.